The chain runs to 261 residues: Cytochrome c oxidase subunit 3 (261 aa).

Topologically, residues 1–15 (MTHQTHAYHMVNPSP) are mitochondrial matrix. Residues 16–34 (WPLTGALSALLMTSGLIMW) form a helical membrane-spanning segment. The Mitochondrial intermembrane segment spans residues 35 to 40 (FHYNSM). Residues 41-66 (ALLTLGFTTNLLTMYQWWRDVIREGT) traverse the membrane as a helical segment. Residues 67–72 (FQGHHT) are Mitochondrial matrix-facing. A helical transmembrane segment spans residues 73–105 (PIVQKGLRYGMVLFIVSEVFFFAGFFWAFYHSS). Topologically, residues 106-128 (LAPTPELGGCWPPTGIIPLNPLE) are mitochondrial intermembrane. The helical transmembrane segment at 129 to 152 (VPLLNTSVLLASGVSITWAHHSLM) threads the bilayer. The Mitochondrial matrix segment spans residues 153-155 (EGN). The chain crosses the membrane as a helical span at residues 156–183 (RKHMLQALFITISLGVYFTLLQASEYYE). Topologically, residues 184-190 (TSFTISD) are mitochondrial intermembrane. A helical transmembrane segment spans residues 191–223 (GVYGSTFFMATGFHGLHVIIGSTFLIVCFLRQL). At 224 to 232 (YYHFTSNHH) the chain is on the mitochondrial matrix side. The chain crosses the membrane as a helical span at residues 233–256 (FGFEAAAWYWHFVDVVWLFLYVSI). Over 257–261 (YWWGS) the chain is Mitochondrial intermembrane.

This sequence belongs to the cytochrome c oxidase subunit 3 family. In terms of assembly, component of the cytochrome c oxidase (complex IV, CIV), a multisubunit enzyme composed of 14 subunits. The complex is composed of a catalytic core of 3 subunits MT-CO1, MT-CO2 and MT-CO3, encoded in the mitochondrial DNA, and 11 supernumerary subunits COX4I, COX5A, COX5B, COX6A, COX6B, COX6C, COX7A, COX7B, COX7C, COX8 and NDUFA4, which are encoded in the nuclear genome. The complex exists as a monomer or a dimer and forms supercomplexes (SCs) in the inner mitochondrial membrane with NADH-ubiquinone oxidoreductase (complex I, CI) and ubiquinol-cytochrome c oxidoreductase (cytochrome b-c1 complex, complex III, CIII), resulting in different assemblies (supercomplex SCI(1)III(2)IV(1) and megacomplex MCI(2)III(2)IV(2)).

The protein resides in the mitochondrion inner membrane. The catalysed reaction is 4 Fe(II)-[cytochrome c] + O2 + 8 H(+)(in) = 4 Fe(III)-[cytochrome c] + 2 H2O + 4 H(+)(out). Component of the cytochrome c oxidase, the last enzyme in the mitochondrial electron transport chain which drives oxidative phosphorylation. The respiratory chain contains 3 multisubunit complexes succinate dehydrogenase (complex II, CII), ubiquinol-cytochrome c oxidoreductase (cytochrome b-c1 complex, complex III, CIII) and cytochrome c oxidase (complex IV, CIV), that cooperate to transfer electrons derived from NADH and succinate to molecular oxygen, creating an electrochemical gradient over the inner membrane that drives transmembrane transport and the ATP synthase. Cytochrome c oxidase is the component of the respiratory chain that catalyzes the reduction of oxygen to water. Electrons originating from reduced cytochrome c in the intermembrane space (IMS) are transferred via the dinuclear copper A center (CU(A)) of subunit 2 and heme A of subunit 1 to the active site in subunit 1, a binuclear center (BNC) formed by heme A3 and copper B (CU(B)). The BNC reduces molecular oxygen to 2 water molecules using 4 electrons from cytochrome c in the IMS and 4 protons from the mitochondrial matrix. The protein is Cytochrome c oxidase subunit 3 (MT-CO3) of Canis lupus familiaris (Dog).